A 343-amino-acid chain; its full sequence is Methionine import ATP-binding protein MetN 3 (343 aa).

An ABC transporter domain is found at 2 to 241 (IELSNITKVF…PKTPLAQKFI (240 aa)). Position 38–45 (38–45 (GASGAGKS)) interacts with ATP.

This sequence belongs to the ABC transporter superfamily. Methionine importer (TC 3.A.1.24) family. As to quaternary structure, the complex is composed of two ATP-binding proteins (MetN), two transmembrane proteins (MetI) and a solute-binding protein (MetQ).

Its subcellular location is the cell inner membrane. The enzyme catalyses L-methionine(out) + ATP + H2O = L-methionine(in) + ADP + phosphate + H(+). The catalysed reaction is D-methionine(out) + ATP + H2O = D-methionine(in) + ADP + phosphate + H(+). Part of the ABC transporter complex MetNIQ involved in methionine import. Responsible for energy coupling to the transport system. The sequence is that of Methionine import ATP-binding protein MetN 3 from Pectobacterium atrosepticum (strain SCRI 1043 / ATCC BAA-672) (Erwinia carotovora subsp. atroseptica).